A 201-amino-acid chain; its full sequence is Desiccation-related protein PCC3-06 (201 aa).

Residues 41-54 show a composition bias toward polar residues; that stretch reads TVASQSQGRQQVSE. Disordered regions lie at residues 41–155 and 177–201; these read TVAS…QNVK and MGKS…TNYF. Basic and acidic residues-rich tracts occupy residues 57 to 76, 108 to 144, and 177 to 193; these read EDAK…KTSE, GELK…ERVA, and MGKS…ETKK.

It belongs to the LEA type 1 family.

The polypeptide is Desiccation-related protein PCC3-06 (Craterostigma plantagineum (Blue gem)).